An 89-amino-acid polypeptide reads, in one-letter code: Large ribosomal subunit protein bL27 (89 aa).

The interval 1–21 is disordered; the sequence is MAHKKAGGSSRNGRDSAGRRL.

This sequence belongs to the bacterial ribosomal protein bL27 family.

This is Large ribosomal subunit protein bL27 from Erythrobacter litoralis (strain HTCC2594).